Consider the following 794-residue polypeptide: Putative neurotrophin receptor LTRK 1 (794 aa).

The signal sequence occupies residues 1 to 33; it reads MRGPRRFRLWTRANVLTVISILTSILSGAGCSP. Residues 34–419 lie on the Extracellular side of the membrane; that stretch reads LSQLPSDNPA…PTEDFGPQTQ (386 aa). Positions 36-102 are disordered; it reads QLPSDNPAHV…DQVPGDASRN (67 aa). Asn-64, Asn-102, and Asn-128 each carry an N-linked (GlcNAc...) asparagine glycan. 2 LRR repeats span residues 181–202 and 205–226; these read CLKH…AFKT and SLET…LLRT. One can recognise an LRRCT domain in the interval 237–280; that stretch reads NALTCSCTNLWLRSVDVAADRSEMTCSTRDGVSKMKMTQFKCEP. N-linked (GlcNAc...) asparagine glycosylation is found at Asn-288 and Asn-374. Residues 420-440 form a helical membrane-spanning segment; it reads VILPVVGVVILLISAVFIIYL. Residues 441–794 are Cytoplasmic-facing; it reads CQRAKHRSHA…GDPVYIDIIA (354 aa). The Protein kinase domain maps to 504-775; sequence ILLMRVIGEG…PQDRLTMKDI (272 aa). ATP is bound by residues 510 to 518 and Lys-538; that span reads IGEGAFGRV. Asp-647 functions as the Proton acceptor in the catalytic mechanism. A phosphotyrosine; by autocatalysis mark is found at Tyr-673, Tyr-677, Tyr-678, and Tyr-789.

This sequence belongs to the protein kinase superfamily. Tyr protein kinase family. Insulin receptor subfamily. As to expression, expression is confined to the central nervous system and its associated endocrine tissues.

Its subcellular location is the membrane. It carries out the reaction L-tyrosyl-[protein] + ATP = O-phospho-L-tyrosyl-[protein] + ADP + H(+). May bind an endogenous invertebrate neurotrophin. Binds human NT-3, but not NGF or BDNF. In Lymnaea stagnalis (Great pond snail), this protein is Putative neurotrophin receptor LTRK 1.